The sequence spans 626 residues: DNA mismatch repair protein MutL (626 aa).

The segment at 377–413 is disordered; sequence EEPQAVKQPTQLWQPSTKPIIEEPIQEEKSWDSNEEG. The segment covering 383–393 has biased composition (polar residues); that stretch reads KQPTQLWQPST.

The protein belongs to the DNA mismatch repair MutL/HexB family.

This protein is involved in the repair of mismatches in DNA. It is required for dam-dependent methyl-directed DNA mismatch repair. May act as a 'molecular matchmaker', a protein that promotes the formation of a stable complex between two or more DNA-binding proteins in an ATP-dependent manner without itself being part of a final effector complex. The sequence is that of DNA mismatch repair protein MutL from Bacillus anthracis (strain A0248).